The chain runs to 180 residues: MSIRLSAVYHPVRDDPDCMFRYMPHEPLPRKLKGDDYTILKLLSDAHRYYYSLSDSFKRVFKESINNAYWSVLTFNDYILINVLDERVKTSIGGDGYEIVSDTTRVIHINIGDEVVLQVVDERVKHYGSSHTIRSIRLVRGEIPDLASFHAYTQSKPYNKGRLPPPREIITPDGHVMKIL.

This is an uncharacterized protein from Magallana gigas (Pacific oyster).